Reading from the N-terminus, the 245-residue chain is Outer membrane protein assembly factor BamD (245 aa).

The N-terminal stretch at 1-19 (MTRMKYLVAAATLSLFLAG) is a signal peptide. Cys-20 carries N-palmitoyl cysteine lipidation. Cys-20 carries S-diacylglycerol cysteine lipidation.

It belongs to the BamD family. Part of the Bam complex, which is composed of the outer membrane protein BamA, and four lipoproteins BamB, BamC, BamD and BamE.

It localises to the cell outer membrane. Functionally, part of the outer membrane protein assembly complex, which is involved in assembly and insertion of beta-barrel proteins into the outer membrane. Constitutes, with BamA, the core component of the assembly machinery. This chain is Outer membrane protein assembly factor BamD, found in Escherichia coli O157:H7.